The following is a 487-amino-acid chain: ATP synthase subunit beta 1 (487 aa).

162-169 is an ATP binding site; that stretch reads GGAGVGKT.

This sequence belongs to the ATPase alpha/beta chains family. As to quaternary structure, F-type ATPases have 2 components, CF(1) - the catalytic core - and CF(0) - the membrane proton channel. CF(1) has five subunits: alpha(3), beta(3), gamma(1), delta(1), epsilon(1). CF(0) has three main subunits: a(1), b(2) and c(9-12). The alpha and beta chains form an alternating ring which encloses part of the gamma chain. CF(1) is attached to CF(0) by a central stalk formed by the gamma and epsilon chains, while a peripheral stalk is formed by the delta and b chains.

The protein resides in the cell inner membrane. The catalysed reaction is ATP + H2O + 4 H(+)(in) = ADP + phosphate + 5 H(+)(out). In terms of biological role, produces ATP from ADP in the presence of a proton gradient across the membrane. The catalytic sites are hosted primarily by the beta subunits. The sequence is that of ATP synthase subunit beta 1 from Gluconobacter oxydans (strain 621H) (Gluconobacter suboxydans).